We begin with the raw amino-acid sequence, 213 residues long: FMN-dependent NADH:quinone oxidoreductase (213 aa).

Residue Ser17–Ser19 participates in FMN binding.

Belongs to the azoreductase type 1 family. As to quaternary structure, homodimer. FMN is required as a cofactor.

It catalyses the reaction 2 a quinone + NADH + H(+) = 2 a 1,4-benzosemiquinone + NAD(+). The enzyme catalyses N,N-dimethyl-1,4-phenylenediamine + anthranilate + 2 NAD(+) = 2-(4-dimethylaminophenyl)diazenylbenzoate + 2 NADH + 2 H(+). In terms of biological role, quinone reductase that provides resistance to thiol-specific stress caused by electrophilic quinones. Also exhibits azoreductase activity. Catalyzes the reductive cleavage of the azo bond in aromatic azo compounds to the corresponding amines. This Ruminiclostridium cellulolyticum (strain ATCC 35319 / DSM 5812 / JCM 6584 / H10) (Clostridium cellulolyticum) protein is FMN-dependent NADH:quinone oxidoreductase.